A 299-amino-acid polypeptide reads, in one-letter code: Bifunctional protein FolD (299 aa).

Residues 168-170, S193, and I234 each bind NADP(+); that span reads GRS.

The protein belongs to the tetrahydrofolate dehydrogenase/cyclohydrolase family. As to quaternary structure, homodimer.

It carries out the reaction (6R)-5,10-methylene-5,6,7,8-tetrahydrofolate + NADP(+) = (6R)-5,10-methenyltetrahydrofolate + NADPH. It catalyses the reaction (6R)-5,10-methenyltetrahydrofolate + H2O = (6R)-10-formyltetrahydrofolate + H(+). Its pathway is one-carbon metabolism; tetrahydrofolate interconversion. In terms of biological role, catalyzes the oxidation of 5,10-methylenetetrahydrofolate to 5,10-methenyltetrahydrofolate and then the hydrolysis of 5,10-methenyltetrahydrofolate to 10-formyltetrahydrofolate. This Bartonella henselae (strain ATCC 49882 / DSM 28221 / CCUG 30454 / Houston 1) (Rochalimaea henselae) protein is Bifunctional protein FolD.